The chain runs to 1562 residues: NAC-alpha domain-containing protein 1 (1562 aa).

A compositionally biased stretch (low complexity) spans 1-13 (MPGEAARAELLLP). Disordered stretches follow at residues 1-24 (MPGEAARAELLLPEADRPGPRTDL), 56-110 (FLPS…TEAP), 131-226 (SPRA…ADGD), 249-288 (SGWGLSPQGSMVDERELHPAGTPEPPSSESSLSADSSSSW), 327-365 (TPLSPEEEEEEAVADPDPGGDLAGEGEEDSTSASFLQSL), 381-458 (RDDT…GAYL), 503-941 (TPQA…EPLA), and 953-1423 (GCAP…AMSK). Positions 195–208 (GDARDSEAELRDEL) are enriched in basic and acidic residues. A compositionally biased stretch (low complexity) spans 275 to 287 (SSESSLSADSSSS). The span at 331–340 (PEEEEEEAVA) shows a compositional bias: acidic residues. Over residues 385 to 397 (SAASSDSDSASYA) the composition is skewed to low complexity. Polar residues-rich tracts occupy residues 449–458 (PQTSDRGAYL) and 550–564 (QEETSLTLCPDSPQN). Residues 992-1007 (PAALDQVQQDDPQPAA) show a composition bias toward low complexity. Basic and acidic residues predominate over residues 1048-1074 (PGREACLEARAHTGDGAKPDSPQKETL). S1068 carries the post-translational modification Phosphoserine. Composition is skewed to low complexity over residues 1172–1182 (APTSAPTSQQP) and 1231–1241 (APGTLAGAALP). Residues 1254–1264 (PQEDSVEDEEP) show a composition bias toward acidic residues. Composition is skewed to low complexity over residues 1265 to 1284 (PGSLGLPPPQAGVQPAAAAV), 1298 to 1308 (SLSPHSPLLSP), and 1335 to 1344 (QSPAGPQGLS). Residues 1348–1357 (QQEDEDSLEE) are compositionally biased toward acidic residues. A Phosphoserine modification is found at S1354. The 66-residue stretch at 1411–1476 (SRSEKKARKA…AKIEDLSQQV (66 aa)) folds into the NAC-A/B domain.

The protein belongs to the NAC-alpha family.

Its subcellular location is the cytoplasm. It localises to the nucleus. Functionally, may prevent inappropriate targeting of non-secretory polypeptides to the endoplasmic reticulum (ER). May bind to nascent polypeptide chains as they emerge from the ribosome and block their interaction with the signal recognition particle (SRP), which normally targets nascent secretory peptides to the ER. May also reduce the inherent affinity of ribosomes for protein translocation sites in the ER membrane (M sites). This Homo sapiens (Human) protein is NAC-alpha domain-containing protein 1 (NACAD).